A 288-amino-acid chain; its full sequence is Bifunctional protein FolD (288 aa).

NADP(+)-binding positions include 166–168 and Ile-232; that span reads GAS.

The protein belongs to the tetrahydrofolate dehydrogenase/cyclohydrolase family. As to quaternary structure, homodimer.

It carries out the reaction (6R)-5,10-methylene-5,6,7,8-tetrahydrofolate + NADP(+) = (6R)-5,10-methenyltetrahydrofolate + NADPH. The enzyme catalyses (6R)-5,10-methenyltetrahydrofolate + H2O = (6R)-10-formyltetrahydrofolate + H(+). Its pathway is one-carbon metabolism; tetrahydrofolate interconversion. Catalyzes the oxidation of 5,10-methylenetetrahydrofolate to 5,10-methenyltetrahydrofolate and then the hydrolysis of 5,10-methenyltetrahydrofolate to 10-formyltetrahydrofolate. This Escherichia coli (strain UTI89 / UPEC) protein is Bifunctional protein FolD.